The chain runs to 733 residues: Cell division cycle protein 48 homolog AF_1297 (733 aa).

ATP contacts are provided by residues 223-230 (GPPGTGKT) and 496-503 (GPPGTGKT).

It belongs to the AAA ATPase family. CDC48 subfamily.

This is Cell division cycle protein 48 homolog AF_1297 from Archaeoglobus fulgidus (strain ATCC 49558 / DSM 4304 / JCM 9628 / NBRC 100126 / VC-16).